A 177-amino-acid chain; its full sequence is Large ribosomal subunit protein uL6 (177 aa).

This sequence belongs to the universal ribosomal protein uL6 family. As to quaternary structure, part of the 50S ribosomal subunit.

In terms of biological role, this protein binds to the 23S rRNA, and is important in its secondary structure. It is located near the subunit interface in the base of the L7/L12 stalk, and near the tRNA binding site of the peptidyltransferase center. This chain is Large ribosomal subunit protein uL6, found in Rickettsia akari (strain Hartford).